Reading from the N-terminus, the 165-residue chain is Putative 4-hydroxy-4-methyl-2-oxoglutarate aldolase (165 aa).

Residues 80-83 (GGNL) and R102 contribute to the substrate site. D103 is an a divalent metal cation binding site.

The protein belongs to the class II aldolase/RraA-like family. Homotrimer. Requires a divalent metal cation as cofactor.

The enzyme catalyses 4-hydroxy-4-methyl-2-oxoglutarate = 2 pyruvate. It catalyses the reaction oxaloacetate + H(+) = pyruvate + CO2. Functionally, catalyzes the aldol cleavage of 4-hydroxy-4-methyl-2-oxoglutarate (HMG) into 2 molecules of pyruvate. Also contains a secondary oxaloacetate (OAA) decarboxylase activity due to the common pyruvate enolate transition state formed following C-C bond cleavage in the retro-aldol and decarboxylation reactions. The chain is Putative 4-hydroxy-4-methyl-2-oxoglutarate aldolase from Cupriavidus necator (strain ATCC 17699 / DSM 428 / KCTC 22496 / NCIMB 10442 / H16 / Stanier 337) (Ralstonia eutropha).